The primary structure comprises 66 residues: MKPSEIREMNLEEIEKKIIELRLELAKERGMLTMGTSLENPMVIRDLRRDIARLLTIKKEKLRSKR.

It belongs to the universal ribosomal protein uL29 family.

The polypeptide is Large ribosomal subunit protein uL29 (Thermococcus sibiricus (strain DSM 12597 / MM 739)).